The chain runs to 606 residues: KH domain-containing protein At4g18375 (606 aa).

The segment covering 1-10 (MVERKKRKQI) has biased composition (basic residues). The interval 1-26 (MVERKKRKQIQRNNSESNRNQKRRIS) is disordered. KH domains are found at residues 35–99 (LVVY…IGFT), 138–210 (NKEC…LFAV), 311–380 (ELVF…VEAV), 394–455 (NVKM…LIQI), and 535–599 (SSAL…ENLV).

Its subcellular location is the nucleus. This Arabidopsis thaliana (Mouse-ear cress) protein is KH domain-containing protein At4g18375.